The sequence spans 300 residues: Formylmethanofuran--tetrahydromethanopterin formyltransferase-like protein (300 aa).

The protein belongs to the FTR family.

In Methanopyrus kandleri (strain AV19 / DSM 6324 / JCM 9639 / NBRC 100938), this protein is Formylmethanofuran--tetrahydromethanopterin formyltransferase-like protein.